The primary structure comprises 158 residues: Eukaryotic translation initiation factor 5A-1 (158 aa).

Over residues 1–10 (MSDEEHHFES) the composition is skewed to basic and acidic residues. Residues 1–21 (MSDEEHHFESSDAGASKTYPQ) form a disordered region. The residue at position 2 (Ser2) is a Phosphoserine. Lys51 bears the Hypusine mark.

Belongs to the eIF-5A family. Lys-51 undergoes hypusination, a unique post-translational modification that consists in the addition of a butylamino group from spermidine to lysine side chain, leading to the formation of the unusual amino acid hypusine. eIF-5As are the only known proteins to undergo this modification, which is essential for their function. Expressed in leaf vasculature and inflorescence stems. Present in xylem tissue but not in phloem, and in developing vessel members, but not in mature vessels members. Detected in anthers.

Functionally, translation factor that promotes translation elongation and termination, particularly upon ribosome stalling at specific amino acid sequence contexts. Binds between the exit (E) and peptidyl (P) site of the ribosome and promotes rescue of stalled ribosome: specifically required for efficient translation of polyproline-containing peptides as well as other motifs that stall the ribosome. Acts as a ribosome quality control (RQC) cofactor by joining the RQC complex to facilitate peptidyl transfer during CAT tailing step. Involved in xylogenesis. The polypeptide is Eukaryotic translation initiation factor 5A-1 (ELF5A-1) (Arabidopsis thaliana (Mouse-ear cress)).